A 352-amino-acid chain; its full sequence is uncharacterized protein (352 aa).

A signal peptide spans 1–22 (MAIYLDKLKMPIIIGLIVLIIA).

The protein belongs to the bacterial solute-binding protein 1 family. WtpA subfamily.

This is an uncharacterized protein from Staphylothermus marinus (strain ATCC 43588 / DSM 3639 / JCM 9404 / F1).